The following is a 647-amino-acid chain: Putative pre-mRNA-splicing factor ATP-dependent RNA helicase C20H4.09 (647 aa).

The 165-residue stretch at 35–199 folds into the Helicase ATP-binding domain; it reads LYAVEQNQIT…FGQDKVCTMS (165 aa). 48–55 is an ATP binding site; the sequence is GHTGCGKT. The DEAH box motif lies at 146–149; sequence DEVH. The Helicase C-terminal domain occupies 219-398; it reads YVDSAIETVI…PLVLFLKGLG (180 aa).

Belongs to the DEAD box helicase family. DEAH subfamily.

The protein resides in the nucleus. It catalyses the reaction ATP + H2O = ADP + phosphate + H(+). In terms of biological role, pre-mRNA processing factor involved in disassembly of spliceosomes after the release of mature mRNA. The sequence is that of Putative pre-mRNA-splicing factor ATP-dependent RNA helicase C20H4.09 from Schizosaccharomyces pombe (strain 972 / ATCC 24843) (Fission yeast).